A 407-amino-acid polypeptide reads, in one-letter code: MKPTVWHHLRLCPHGHPDETLDDAAIAVDETGTIVWLGAFSALPHGYAHWQREDLHGAWVTPGLVDCHTHLVYGGTRADEFAQRLAGVSYEEIARQGGGIVSTVRATRAADETTLFVQAAARLQPLLAEGVSAIEIKSGYGLDLASERKMLRVARQLGERFPVSVYTTFLGAHALPPEYAGRADEYIDEVCERMLPTLADEGLVDAVDVFCERIGFSLAQTERVFEAATRRGLPVKLHAEQLSNAGGTALAARYRALSADHLEFLDEAGIEAMKAAGTVAVLLPGAYYFIRETQLPPIELLRKHGVPIALATDHNPGTSPLESLLLTLNMGCTLFRMTVPEVLQGVTRHAAAALGRADRHGALEIGRQADFAVWSVGSLAELAYWIGRPLCEQVVRGGATVFRRMNG.

2 residues coordinate Fe(3+): His68 and His70. The Zn(2+) site is built by His68 and His70. Positions 77, 140, and 173 each coordinate 4-imidazolone-5-propanoate. Tyr140 contributes to the N-formimidoyl-L-glutamate binding site. A Fe(3+)-binding site is contributed by His238. His238 serves as a coordination point for Zn(2+). Gln241 contacts 4-imidazolone-5-propanoate. Asp313 contributes to the Fe(3+) binding site. Position 313 (Asp313) interacts with Zn(2+). N-formimidoyl-L-glutamate is bound by residues Asn315 and Gly317. A 4-imidazolone-5-propanoate-binding site is contributed by Thr318.

The protein belongs to the metallo-dependent hydrolases superfamily. HutI family. Zn(2+) serves as cofactor. It depends on Fe(3+) as a cofactor.

The protein resides in the cytoplasm. The enzyme catalyses 4-imidazolone-5-propanoate + H2O = N-formimidoyl-L-glutamate. It participates in amino-acid degradation; L-histidine degradation into L-glutamate; N-formimidoyl-L-glutamate from L-histidine: step 3/3. In terms of biological role, catalyzes the hydrolytic cleavage of the carbon-nitrogen bond in imidazolone-5-propanoate to yield N-formimidoyl-L-glutamate. It is the third step in the universal histidine degradation pathway. This chain is Imidazolonepropionase, found in Burkholderia ambifaria (strain ATCC BAA-244 / DSM 16087 / CCUG 44356 / LMG 19182 / AMMD) (Burkholderia cepacia (strain AMMD)).